A 1015-amino-acid polypeptide reads, in one-letter code: Beta-galactosidase (1015 aa).

E434 functions as the Proton donor in the catalytic mechanism. Catalysis depends on E513, which acts as the Nucleophile.

This sequence belongs to the glycosyl hydrolase 2 family. Mg(2+) serves as cofactor. The cofactor is Mn(2+).

The catalysed reaction is Hydrolysis of terminal non-reducing beta-D-galactose residues in beta-D-galactosides.. This chain is Beta-galactosidase (lacZ), found in Arthrobacter sp. (strain B7).